The following is a 321-amino-acid chain: Malate dehydrogenase (321 aa).

NAD(+) is bound by residues 13 to 18 (GAGNIG) and D38. Substrate-binding residues include R87 and R93. Residues N100 and 123 to 125 (VTN) contribute to the NAD(+) site. Substrate-binding residues include N125 and R156. Catalysis depends on H180, which acts as the Proton acceptor.

The protein belongs to the LDH/MDH superfamily. MDH type 3 family.

It catalyses the reaction (S)-malate + NAD(+) = oxaloacetate + NADH + H(+). Its function is as follows. Catalyzes the reversible oxidation of malate to oxaloacetate. This is Malate dehydrogenase from Anaplasma phagocytophilum (strain HZ).